A 734-amino-acid polypeptide reads, in one-letter code: Diacylglycerol kinase alpha (734 aa).

EF-hand domains are found at residues 109–144 (RPEDKLEFTFKLYDTDRNGILDSSEVDRIIIQMMRM) and 154–189 (ELRPILQEMMKEIDYDGSGSVSLAEWLRAGATTVPL). Positions 122, 124, 126, 133, 167, 169, 171, 173, and 178 each coordinate Ca(2+). Phorbol-ester/DAG-type zinc fingers lie at residues 204–252 (QHMW…ALPC) and 268–318 (SHVW…GHEC). The DAGKc domain occupies 371–505 (SNTHPLLVFV…MDRWSVEVIP (135 aa)). The residue at position 483 (K483) is an N6-acetyllysine.

Belongs to the eukaryotic diacylglycerol kinase family. Monomer.

The protein resides in the cytoplasm. It is found in the cytosol. The enzyme catalyses a 1,2-diacyl-sn-glycerol + ATP = a 1,2-diacyl-sn-glycero-3-phosphate + ADP + H(+). The catalysed reaction is a 1-O-alkyl-sn-glycerol + ATP = a 1-O-alkyl-sn-glycero-3-phosphate + ADP + H(+). It catalyses the reaction 1-O-alkyl-2-acyl-sn-glycerol + ATP = 1-O-alkyl-2-acyl-sn-glycero-3-phosphate + ADP + H(+). It carries out the reaction 1,2-dihexadecanoyl-sn-glycerol + ATP = 1,2-dihexadecanoyl-sn-glycero-3-phosphate + ADP + H(+). The enzyme catalyses 1-hexadecanoyl-2-(9Z-octadecenoyl)-sn-glycerol + ATP = 1-hexadecanoyl-2-(9Z-octadecenoyl)-sn-glycero-3-phosphate + ADP + H(+). The catalysed reaction is 2-(9Z-octadecenoyl)-glycerol + ATP = 2-(9Z-octadecenoyl)-sn-glycero-3-phosphate + ADP + H(+). It catalyses the reaction 1,2-di-(9Z-octadecenoyl)-sn-glycerol + ATP = 1,2-di-(9Z-octadecenoyl)-sn-glycero-3-phosphate + ADP + H(+). It carries out the reaction 1-octadecanoyl-2-(5Z,8Z,11Z,14Z-eicosatetraenoyl)-sn-glycerol + ATP = 1-octadecanoyl-2-(5Z,8Z,11Z,14Z-eicosatetraenoyl)-sn-glycero-3-phosphate + ADP + H(+). The enzyme catalyses 1,2-didecanoyl-sn-glycerol + ATP = 1,2-didecanoyl-sn-glycero-3-phosphate + ADP + H(+). The catalysed reaction is 1-O-hexadecyl-2-acetyl-sn-glycerol + ATP = 1-O-hexadecyl-2-acetyl-sn-glycero-3-phosphate + ADP + H(+). It catalyses the reaction 1-O-hexadecyl-2-(5Z,8Z,11Z,14Z-eicosatetraenoyl)-sn-glycerol + ATP = 1-O-hexadecyl-2-(5Z,8Z,11Z,14Z-eicosatetraenoyl)-sn-glycero-3-phosphate + ADP + H(+). It carries out the reaction 1-O-hexadecyl-2-(9Z-octadecenoyl)-sn-glycerol + ATP = 1-O-hexadecyl-2-(9Z-octadecenoyl)-sn-glycero-3-phosphate + ADP + H(+). The enzyme catalyses 1-O-hexadecyl-sn-glycerol + ATP = 1-O-hexadecyl-sn-glycero-3-phosphate + ADP + H(+). It participates in lipid metabolism; glycerolipid metabolism. Its activity is regulated as follows. Stimulated by calcium and phosphatidylserine. Functionally, diacylglycerol kinase that converts diacylglycerol/DAG into phosphatidic acid/phosphatidate/PA and regulates the respective levels of these two bioactive lipids. Thereby, acts as a central switch between the signaling pathways activated by these second messengers with different cellular targets and opposite effects in numerous biological processes. Also plays an important role in the biosynthesis of complex lipids. Can also phosphorylate 1-alkyl-2-acylglycerol in vitro as efficiently as diacylglycerol provided it contains an arachidonoyl group. Also involved in the production of alkyl-lysophosphatidic acid, another bioactive lipid, through the phosphorylation of 1-alkyl-2-acetyl glycerol. The sequence is that of Diacylglycerol kinase alpha (DGKA) from Bos taurus (Bovine).